A 299-amino-acid polypeptide reads, in one-letter code: Sulfate adenylyltransferase subunit 2 (299 aa).

It belongs to the PAPS reductase family. CysD subfamily. Sulfate-activating enzymes, NodP and NodQ, may be physically associated.

It carries out the reaction sulfate + ATP + H(+) = adenosine 5'-phosphosulfate + diphosphate. In terms of biological role, proposed to provide activated sulfate for transfer to nod factor. The sequence is that of Sulfate adenylyltransferase subunit 2 (nodP) from Rhizobium meliloti (strain 1021) (Ensifer meliloti).